The following is a 214-amino-acid chain: MPDKKTLWMLNELEGFEKPKIKLEQYATSSELAVSMMEMIDETIGFEGKKLIDIGCGCGMLMTTAATMYELETVLGVDIDDEALKICSRNLETAEVQDRCELLQADILDPESDLPRGTFDVAVINPPFGTKNNAGIDMQFVQIGLQMVRPGGSVFSLHKSSTRDYILKNAKKWDGVGAECCAEMRWQLPATYKFHKQKAVDIAVDLIHFKKLDS.

S-adenosyl-L-methionine-binding positions include Q25, T28, G55, C58, D78, and 106–107 (DI).

The protein belongs to the methyltransferase superfamily. PrmA family. As to quaternary structure, heterodimer; heterodimerizes with TRMT112/C04H5.1.

The catalysed reaction is adenosine in rRNA + S-adenosyl-L-methionine = N(6)-methyladenosine in rRNA + S-adenosyl-L-homocysteine + H(+). Functionally, catalytic subunit of a heterodimer with TRMT112/C04H5.1, which specifically methylates the 6th position of adenine in position 1717 of 18S rRNA. In Caenorhabditis elegans, this protein is rRNA N(6)-adenosine-methyltransferase metl-5.